We begin with the raw amino-acid sequence, 512 residues long: Glucose-6-phosphate 1-dehydrogenase (512 aa).

NADP(+) is bound by residues R61, 103-104 (EF), and K171. H201, K205, E239, and D258 together coordinate substrate. H263 serves as the catalytic Proton acceptor. Residues K360 and K365 each coordinate substrate. The disordered stretch occupies residues 479-512 (QDSSPSFPNYPAGSSGPKEADALIERDGRSWRPL). Over residues 496–512 (KEADALIERDGRSWRPL) the composition is skewed to basic and acidic residues.

The protein belongs to the glucose-6-phosphate dehydrogenase family.

It catalyses the reaction D-glucose 6-phosphate + NADP(+) = 6-phospho-D-glucono-1,5-lactone + NADPH + H(+). The protein operates within carbohydrate degradation; pentose phosphate pathway; D-ribulose 5-phosphate from D-glucose 6-phosphate (oxidative stage): step 1/3. Functionally, catalyzes the oxidation of glucose 6-phosphate to 6-phosphogluconolactone. The protein is Glucose-6-phosphate 1-dehydrogenase of Chlamydia pneumoniae (Chlamydophila pneumoniae).